Here is a 189-residue protein sequence, read N- to C-terminus: Thymidine kinase (189 aa).

ATP-binding positions include 9-16 (GTMNSGKT) and 85-88 (DESQ). Glu86 (proton acceptor) is an active-site residue. Residues Cys143, Cys146, Cys180, and His183 each contribute to the Zn(2+) site.

The protein belongs to the thymidine kinase family. As to quaternary structure, homotetramer.

The protein resides in the cytoplasm. It catalyses the reaction thymidine + ATP = dTMP + ADP + H(+). The chain is Thymidine kinase from Streptococcus pyogenes serotype M18 (strain MGAS8232).